The following is a 464-amino-acid chain: MEPSPLELPVDAVRRIAAELNCDPTDERVALRLDEEDKLSHFRNCFYIPKMRDLPSIDLSLVSEDDDAIYFLGNSLGLQPKMVRTYLEEELDKWAKMGAYGHDVGKRPWIVGDESIVSLMKDIVGAHEKEIALMNALTINLHLLLLSFFKPTPKRHKILLEAKAFPSDHYAIESQIQLHGLDVEKSMRMVKPREGEETLRMEDILEVIEEEGDSIAVILFSGLHFYTGQLFNIPAITKAGHAKGCFVGFDLAHAVGNVELRLHDWGVDFACWCSYKYLNSGAGGLAGAFVHEKHAHTVKPALVGWFGHDLSTRFNMDNKLQLIPGANGFRISNPPILLVCSLHASLEVFQQATMTALRRKSILLTGYLEYMLKHYHSKDNTENKGPIVNIITPSRAEERGCQLTLTFSIPKKSVFKELEKRGVVCDKREPDGIRVAPVPLYNSFHDVYKFIRLLTSILDSSERS.

M1 carries the N-acetylmethionine modification. Pyridoxal 5'-phosphate contacts are provided by residues L137, T138, 165–168, S221, D250, H253, and Y275; that span reads FPSD. At K276 the chain carries N6-(pyridoxal phosphate)lysine. W305 and N333 together coordinate pyridoxal 5'-phosphate.

The protein belongs to the kynureninase family. In terms of assembly, homodimer. Pyridoxal 5'-phosphate serves as cofactor.

It is found in the cytoplasm. The protein localises to the cytosol. The enzyme catalyses L-kynurenine + H2O = anthranilate + L-alanine + H(+). It carries out the reaction 3-hydroxy-L-kynurenine + H2O = 3-hydroxyanthranilate + L-alanine + H(+). Its pathway is amino-acid degradation; L-kynurenine degradation; L-alanine and anthranilate from L-kynurenine: step 1/1. The protein operates within cofactor biosynthesis; NAD(+) biosynthesis; quinolinate from L-kynurenine: step 2/3. In terms of biological role, catalyzes the cleavage of L-kynurenine (L-Kyn) and L-3-hydroxykynurenine (L-3OHKyn) into anthranilic acid (AA) and 3-hydroxyanthranilic acid (3-OHAA), respectively. Has a preference for the L-3-hydroxy form. Also has cysteine-conjugate-beta-lyase activity. The chain is Kynureninase (Kynu) from Mus musculus (Mouse).